Consider the following 95-residue polypeptide: Large ribosomal subunit protein bL25 (95 aa).

It belongs to the bacterial ribosomal protein bL25 family. Part of the 50S ribosomal subunit; part of the 5S rRNA/L5/L18/L25 subcomplex. Contacts the 5S rRNA. Binds to the 5S rRNA independently of L5 and L18.

Functionally, this is one of the proteins that binds to the 5S RNA in the ribosome where it forms part of the central protuberance. This Actinobacillus pleuropneumoniae serotype 3 (strain JL03) protein is Large ribosomal subunit protein bL25.